The primary structure comprises 243 residues: DNA repair protein RecO (243 aa).

Belongs to the RecO family.

In terms of biological role, involved in DNA repair and RecF pathway recombination. This is DNA repair protein RecO from Azoarcus sp. (strain BH72).